Consider the following 738-residue polypeptide: NADH dehydrogenase [ubiquinone] iron-sulfur protein 1, mitochondrial (738 aa).

The transit peptide at 1–27 directs the protein to the mitochondrion; it reads MGLGLLASRALRSSRIIRNSTRTIVST. Positions 66 to 144 constitute a 2Fe-2S ferredoxin-type domain; sequence DVIEVFVDGY…GMKIKTDTPI (79 aa). 4 residues coordinate [2Fe-2S] cluster: Cys-100, Cys-111, Cys-114, and Cys-128. The 4Fe-4S His(Cys)3-ligated-type domain maps to 144–183; sequence IAKKAREGVMEFLLMNHPLDCPICDQGGECDLQDQSMAFG. [4Fe-4S] cluster-binding residues include His-160, Cys-164, Cys-167, Cys-173, Cys-212, Cys-215, Cys-218, and Cys-262. Positions 281-337 constitute a 4Fe-4S Mo/W bis-MGD-type domain; sequence LKGTESIDVTDAVGSNIRIDSRGPEVMRVVPRLNEDINEEWISDKTRFFYDGLKRQR.

The protein belongs to the complex I 75 kDa subunit family. In terms of assembly, complex I is composed of about 45 different subunits. This is a component of the iron-sulfur (IP) fragment of the enzyme. The cofactor is [2Fe-2S] cluster. It depends on [4Fe-4S] cluster as a cofactor.

The protein localises to the mitochondrion inner membrane. It catalyses the reaction a ubiquinone + NADH + 5 H(+)(in) = a ubiquinol + NAD(+) + 4 H(+)(out). Functionally, core subunit of the mitochondrial membrane respiratory chain NADH dehydrogenase (Complex I) that is believed to belong to the minimal assembly required for catalysis. Complex I functions in the transfer of electrons from NADH to the respiratory chain. The immediate electron acceptor for the enzyme is believed to be ubiquinone. This is the largest subunit of complex I and it is a component of the iron-sulfur (IP) fragment of the enzyme. It may form part of the active site crevice where NADH is oxidized. This is NADH dehydrogenase [ubiquinone] iron-sulfur protein 1, mitochondrial from Solanum tuberosum (Potato).